Consider the following 63-residue polypeptide: Cytochrome c oxidase subunit 7C, mitochondrial (63 aa).

Residues 1–16 (MLGQSIRRFTTSVVRR) constitute a mitochondrion transit peptide. The Mitochondrial matrix portion of the chain corresponds to 17–33 (SHYEEGPGKNLPFSVEN). N6-acetyllysine; alternate is present on K25. K25 carries the N6-succinyllysine; alternate modification. The helical transmembrane segment at 34–60 (KWRLLAMMTLYFGSGFAAPFFIVRHQL) threads the bilayer. The Mitochondrial intermembrane segment spans residues 61–63 (LKK).

This sequence belongs to the cytochrome c oxidase VIIc family. As to quaternary structure, component of the cytochrome c oxidase (complex IV, CIV), a multisubunit enzyme composed of 14 subunits. The complex is composed of a catalytic core of 3 subunits MT-CO1, MT-CO2 and MT-CO3, encoded in the mitochondrial DNA, and 11 supernumerary subunits COX4I, COX5A, COX5B, COX6A, COX6B, COX6C, COX7A, COX7B, COX7C, COX8 and NDUFA4, which are encoded in the nuclear genome. The complex exists as a monomer or a dimer and forms supercomplexes (SCs) in the inner mitochondrial membrane with NADH-ubiquinone oxidoreductase (complex I, CI) and ubiquinol-cytochrome c oxidoreductase (cytochrome b-c1 complex, complex III, CIII), resulting in different assemblies (supercomplex SCI(1)III(2)IV(1) and megacomplex MCI(2)III(2)IV(2)). Interacts with RAB5IF.

It is found in the mitochondrion inner membrane. Its pathway is energy metabolism; oxidative phosphorylation. Component of the cytochrome c oxidase, the last enzyme in the mitochondrial electron transport chain which drives oxidative phosphorylation. The respiratory chain contains 3 multisubunit complexes succinate dehydrogenase (complex II, CII), ubiquinol-cytochrome c oxidoreductase (cytochrome b-c1 complex, complex III, CIII) and cytochrome c oxidase (complex IV, CIV), that cooperate to transfer electrons derived from NADH and succinate to molecular oxygen, creating an electrochemical gradient over the inner membrane that drives transmembrane transport and the ATP synthase. Cytochrome c oxidase is the component of the respiratory chain that catalyzes the reduction of oxygen to water. Electrons originating from reduced cytochrome c in the intermembrane space (IMS) are transferred via the dinuclear copper A center (CU(A)) of subunit 2 and heme A of subunit 1 to the active site in subunit 1, a binuclear center (BNC) formed by heme A3 and copper B (CU(B)). The BNC reduces molecular oxygen to 2 water molecules using 4 electrons from cytochrome c in the IMS and 4 protons from the mitochondrial matrix. This Sus scrofa (Pig) protein is Cytochrome c oxidase subunit 7C, mitochondrial (COX7C).